We begin with the raw amino-acid sequence, 161 residues long: Vitamin K epoxide reductase complex subunit 1 (161 aa).

At 1–9 (MGTTWRSPG) the chain is on the cytoplasmic side. Residues 10–29 (RLRLALCLAGLALSLYALHV) form a helical membrane-spanning segment. The Lumenal portion of the chain corresponds to 30–80 (KAARARNEDYRALCDVGTAISCSRVFSSRWGRGFGLVEHVLGADSILNQSN). Cys43 and Cys51 are disulfide-bonded. Residue Asn80 participates in (S)-warfarin binding. Residues 81 to 95 (SIFGCMFYTIQLLLG) traverse the membrane as a helical segment. Residues 96–100 (CLRGR) are Cytoplasmic-facing. The chain crosses the membrane as a helical span at residues 101–128 (WASILLILSSLVSVAGSLYLAWILFFVL). Residues 129–131 (YDF) lie on the Lumenal side of the membrane. A disulfide bridge connects residues Cys132 and Cys135. Residues 132–153 (CIVCITTYAINAGLMLLSFQKV) traverse the membrane as a helical segment. Phylloquinone-binding residues include Cys135 and Tyr139. Residue Tyr139 coordinates (S)-warfarin. The Cytoplasmic segment spans residues 154–161 (PEHKVKKP).

Belongs to the VKOR family. In terms of tissue distribution, highly expressed in liver. Detected at lower levels in lung, kidney and testis.

The protein resides in the endoplasmic reticulum membrane. The catalysed reaction is phylloquinone + [protein]-disulfide + H2O = 2,3-epoxyphylloquinone + [protein]-dithiol. It carries out the reaction phylloquinol + [protein]-disulfide = phylloquinone + [protein]-dithiol. Its activity is regulated as follows. Inhibited by warfarin (coumadin). Warfarin locks VKORC1 in both redox states into the closed conformation. In terms of biological role, involved in vitamin K metabolism. Catalytic subunit of the vitamin K epoxide reductase (VKOR) complex which reduces inactive vitamin K 2,3-epoxide to active vitamin K. Vitamin K is required for the gamma-carboxylation of various proteins, including clotting factors, and is required for normal blood coagulation, but also for normal bone development. In Rattus norvegicus (Rat), this protein is Vitamin K epoxide reductase complex subunit 1 (Vkorc1).